A 420-amino-acid polypeptide reads, in one-letter code: MSSRYLFTSESVTEGHPDKICDQISDTIIDAILAQDPQSRVAAEVVVNTGLVLITGEITTKAQVNYIELARKKIADIGYVHAENGFSADSCSVLVALDEQSADIAQGVDKAQETRELLSEEELDAVGAGDQGLMFGFACNETPELMPLPISLAHRVCRQLTAVRKTGQLPYLRPDGKSQVTITYEDGRPVGIDTILISTQHTAKIGEITELSDIQAKIKEDLWKYVVEPIFKDAEIKPNSQTRFLVNPTGKFVIGGPQGDCGLTGRKIIIDTYGGYSRHGGGAFSGKDPTKVDRSAAYACRYIAKNIVAADLAEKCEVQISYAIGVAKPVSMMIETFGTSKVDEDKLLEVVKENFELRPAGIIQNFNLRNLPGERGGRFYQDVAAYGHLGRTDLDLPWEQTDKVELLKQAFSPQLLATAS.

His16 provides a ligand contact to ATP. Asp18 provides a ligand contact to Mg(2+). Glu44 is a K(+) binding site. Residues Glu57 and Gln100 each contribute to the L-methionine site. The segment at 100-110 (QSADIAQGVDK) is flexible loop. Residues 175–177 (DGK), 251–252 (KF), Asp260, 266–267 (RK), Ala283, and Lys287 contribute to the ATP site. L-methionine is bound at residue Asp260. An L-methionine-binding site is contributed by Lys291.

Belongs to the AdoMet synthase family. Homotetramer; dimer of dimers. It depends on Mg(2+) as a cofactor. K(+) is required as a cofactor.

The protein resides in the cytoplasm. The catalysed reaction is L-methionine + ATP + H2O = S-adenosyl-L-methionine + phosphate + diphosphate. It functions in the pathway amino-acid biosynthesis; S-adenosyl-L-methionine biosynthesis; S-adenosyl-L-methionine from L-methionine: step 1/1. Its function is as follows. Catalyzes the formation of S-adenosylmethionine (AdoMet) from methionine and ATP. The overall synthetic reaction is composed of two sequential steps, AdoMet formation and the subsequent tripolyphosphate hydrolysis which occurs prior to release of AdoMet from the enzyme. The protein is S-adenosylmethionine synthase of Trichodesmium erythraeum (strain IMS101).